The chain runs to 391 residues: Erythronate-4-phosphate dehydrogenase (391 aa).

The substrate site is built by serine 45 and threonine 67. NAD(+) contacts are provided by aspartate 147 and threonine 176. Arginine 209 is a catalytic residue. Aspartate 238 lines the NAD(+) pocket. Residue glutamate 243 is part of the active site. The Proton donor role is filled by histidine 260. Position 263 (glycine 263) interacts with NAD(+). Position 264 (tyrosine 264) interacts with substrate.

It belongs to the D-isomer specific 2-hydroxyacid dehydrogenase family. PdxB subfamily. In terms of assembly, homodimer.

Its subcellular location is the cytoplasm. The enzyme catalyses 4-phospho-D-erythronate + NAD(+) = (R)-3-hydroxy-2-oxo-4-phosphooxybutanoate + NADH + H(+). Its pathway is cofactor biosynthesis; pyridoxine 5'-phosphate biosynthesis; pyridoxine 5'-phosphate from D-erythrose 4-phosphate: step 2/5. Functionally, catalyzes the oxidation of erythronate-4-phosphate to 3-hydroxy-2-oxo-4-phosphonooxybutanoate. The polypeptide is Erythronate-4-phosphate dehydrogenase (Photobacterium profundum (strain SS9)).